The sequence spans 147 residues: Peptide methionine sulfoxide reductase MsrB 2 (147 aa).

The MsrB domain maps to 6-129 (TDEEVSKLTP…NSAALRFIPR (124 aa)). Catalysis depends on cysteine 118, which acts as the Nucleophile.

This sequence belongs to the MsrB Met sulfoxide reductase family.

The catalysed reaction is L-methionyl-[protein] + [thioredoxin]-disulfide + H2O = L-methionyl-(R)-S-oxide-[protein] + [thioredoxin]-dithiol. The protein is Peptide methionine sulfoxide reductase MsrB 2 (msrB2) of Rhizobium meliloti (strain 1021) (Ensifer meliloti).